The sequence spans 608 residues: Rap1 GTPase-GDP dissociation stimulator 1 (608 aa).

ARM repeat units follow at residues 89 to 131 (GLIS…DQAG) and 171 to 212 (DSLQ…NLAE). The segment at 122–171 (EGRSAVDQAGGAQIVVDHLRSLCSKTDPASEKLLTVFCGMLMNYSNEKND) is prevents binding to prenylated RHOA. The residue at position 231 (K231) is an N6-acetyllysine. ARM repeat units lie at residues 348–391 (DGNC…NLAI), 392–432 (PVVN…MLID), and 480–520 (SKDV…LIAA).

In terms of assembly, interacts with RABL3. Interacts with RHOT1. As to quaternary structure, interacts with unprenylated RHOA; the interaction is direct. Interacts with RAP1A. Interacts with KRAS. Interacts with RAC1. Interacts with RAP1B. Preferentially interacts with unprenylated GTPases that will become geranylgeranylated. May also interact with prenylated GTPases. Interacts with prenylated RHOA; the interaction is direct and in a 1:1 stoichiometry. Interacts with RAP1A. Interacts with KRAS. Interacts with RAC1. Interacts with RAP1B. Preferentially interacts with prenylated GTPases. Post-translationally, the N-terminus is blocked. Forms covalent cross-links mediated by transglutaminase TGM2, between a glutamine and the epsilon-amino group of a lysine residue, forming homopolymers and heteropolymers. In terms of tissue distribution, brain.

The protein localises to the cytoplasm. Its subcellular location is the cytosol. It is found in the endoplasmic reticulum. The protein resides in the mitochondrion. It localises to the nucleus. In terms of biological role, acts as a GEF (guanine nucleotide exchange factor) for the Rho family of small GTP-binding proteins (G proteins) that stimulates the dissociation of GDP to enable subsequent binding of GTP. Additionally, appears to chaperone the processing and/or trafficking of small GTPases containing a C-terminal polybasic region independently of GEF activity. Targets include RAP1A/RAP1B, RHOA, RHOB, RHOC, RAC1 and KRAS. Regulates mitochondrial dynamics by controlling RHOT function to promote mitochondrial fission during high calcium conditions. Able to promote the Ca(2+) release from the endoplasmic reticulum via both inositol trisphosphate (Ins3P) and ryanodine sensitive receptors leading to a enhanced mitochondrial Ca(2+) uptake. Its function is as follows. Acts as a GEF (guanine nucleotide exchange factor) for unprenylated RHOA. Chaperones the entry and passage of small GTPases through the prenylation pathway. Recognizes the last amino acid in the GTPase C-terminal CAAX motif with a preference for 'Leu' over 'Met', indicating involvement in the geranylgeranylation pathway. May also recognize prenylated GTPases. Functionally, acts as a GEF (guanine nucleotide exchange factor) for prenylated RHOA. Acts as a GEF for RHOC. Chaperones the downstream trafficking and/or processing of small newly prenylated GTPases. Escorts RAC1 to the nucleus. This Bos taurus (Bovine) protein is Rap1 GTPase-GDP dissociation stimulator 1 (RAP1GDS1).